A 546-amino-acid polypeptide reads, in one-letter code: Probable protein kinase UbiB (546 aa).

A Protein kinase domain is found at 124-502 (DFEIKPLASA…HVRQGQSRYF (379 aa)). ATP contacts are provided by residues 130 to 138 (LASASIAQV) and lysine 153. The active-site Proton acceptor is aspartate 288. A run of 2 helical transmembrane segments spans residues 501 to 521 (YFLG…VSRP) and 522 to 542 (EWGL…FVGW).

This sequence belongs to the ABC1 family. UbiB subfamily.

The protein localises to the cell inner membrane. It functions in the pathway cofactor biosynthesis; ubiquinone biosynthesis [regulation]. Its function is as follows. Is probably a protein kinase regulator of UbiI activity which is involved in aerobic coenzyme Q (ubiquinone) biosynthesis. The chain is Probable protein kinase UbiB from Escherichia coli O45:K1 (strain S88 / ExPEC).